The chain runs to 192 residues: MFIAILMGAYLLGSIPFAYILTKLMAKRDIREVGSKNVGATNVFRVNKGLAGLVLLLDIAKSAVLIYSLKEYDIVSTKEELCIVGLLSVLGHIYPIWLKFKGGKGVATGIGVIIPLNPLMLCVFFISWLFTFNNTRYASLSSIVSIIATMIVCYLTESGVVALLYTVQSILILFKHRENIVRLIKREEKKVI.

Helical transmembrane passes span 1–21, 49–69, 80–100, 110–130, and 143–163; these read MFIA…AYIL, GLAG…IYSL, ELCI…WLKF, IGVI…SWLF, and IVSI…VVAL.

This sequence belongs to the PlsY family. As to quaternary structure, probably interacts with PlsX.

Its subcellular location is the cell inner membrane. It catalyses the reaction an acyl phosphate + sn-glycerol 3-phosphate = a 1-acyl-sn-glycero-3-phosphate + phosphate. It participates in lipid metabolism; phospholipid metabolism. In terms of biological role, catalyzes the transfer of an acyl group from acyl-phosphate (acyl-PO(4)) to glycerol-3-phosphate (G3P) to form lysophosphatidic acid (LPA). This enzyme utilizes acyl-phosphate as fatty acyl donor, but not acyl-CoA or acyl-ACP. This Anaplasma phagocytophilum (strain HZ) protein is Glycerol-3-phosphate acyltransferase.